Reading from the N-terminus, the 126-residue chain is UPF0102 protein BH12350 (126 aa).

The protein belongs to the UPF0102 family.

In Bartonella henselae (strain ATCC 49882 / DSM 28221 / CCUG 30454 / Houston 1) (Rochalimaea henselae), this protein is UPF0102 protein BH12350.